A 310-amino-acid chain; its full sequence is MTTRTEAVKAYLLDLQDRICSALETFETDTRFIEDAWTRPAGGGGRTRVIENGSVIEKGGVNFSHVFGSGLPPSASAHRPELAGRGFEALGVSLVIHPHNPHVPTSHANVRFFIAEKEGEEPVWWFGGGFDLTPYYGNEEDCIHWHRVAEQACAPFGPDVYSRYKAWCDTYFHIKHRNEPRGIGGLFFDDLNEWDFDTCFAFIRAIGDAYIDAYLPIVQRRKAMAYTEQQRQFQEFRRGRYVEFNLVYDRGTLFGLQSGGRTESILMSLPPQVRWSYDWKAEVGSEEARLTDYFLQDRDWLGLTAPKAAV.

S93 is a binding site for substrate. A divalent metal cation contacts are provided by H97 and H107. H107 functions as the Proton donor in the catalytic mechanism. Residue 109-111 (NVR) coordinates substrate. Residues H146 and H176 each coordinate a divalent metal cation. The important for dimerization stretch occupies residues 241 to 276 (YVEFNLVYDRGTLFGLQSGGRTESILMSLPPQVRWS). Substrate is bound at residue 259–261 (GGR).

The protein belongs to the aerobic coproporphyrinogen-III oxidase family. In terms of assembly, homodimer. A divalent metal cation serves as cofactor.

The protein localises to the cytoplasm. It carries out the reaction coproporphyrinogen III + O2 + 2 H(+) = protoporphyrinogen IX + 2 CO2 + 2 H2O. Its pathway is porphyrin-containing compound metabolism; protoporphyrin-IX biosynthesis; protoporphyrinogen-IX from coproporphyrinogen-III (O2 route): step 1/1. Functionally, involved in the heme biosynthesis. Catalyzes the aerobic oxidative decarboxylation of propionate groups of rings A and B of coproporphyrinogen-III to yield the vinyl groups in protoporphyrinogen-IX. This Pseudomonas fluorescens (strain SBW25) protein is Oxygen-dependent coproporphyrinogen-III oxidase.